Reading from the N-terminus, the 716-residue chain is Delta-1-pyrroline-5-carboxylate synthase 1 (716 aa).

The glutamate 5-kinase stretch occupies residues methionine 1–arginine 296. Substrate contacts are provided by serine 60, aspartate 157, and asparagine 176. Residues serine 196 to aspartate 197, tyrosine 202 to serine 207, and arginine 236 to lysine 242 contribute to the ATP site. Residues glutamate 297–glutamine 716 form a gamma-glutamyl phosphate reductase region.

In the N-terminal section; belongs to the glutamate 5-kinase family. The protein in the C-terminal section; belongs to the gamma-glutamyl phosphate reductase family. In terms of tissue distribution, expressed at high levels in leaves.

It catalyses the reaction L-glutamate + ATP = L-glutamyl 5-phosphate + ADP. The catalysed reaction is L-glutamate 5-semialdehyde + phosphate + NADP(+) = L-glutamyl 5-phosphate + NADPH + H(+). It participates in amino-acid biosynthesis; L-proline biosynthesis; L-glutamate 5-semialdehyde from L-glutamate: step 1/2. It functions in the pathway amino-acid biosynthesis; L-proline biosynthesis; L-glutamate 5-semialdehyde from L-glutamate: step 2/2. With respect to regulation, feedback regulated by proline. Functionally, P5CS plays a key role in proline biosynthesis, leading to osmoregulation in plants. Involved in abiotic stress tolerance. The polypeptide is Delta-1-pyrroline-5-carboxylate synthase 1 (Oryza sativa subsp. japonica (Rice)).